We begin with the raw amino-acid sequence, 178 residues long: Photosystem I assembly protein Ycf4 (178 aa).

Helical transmembrane passes span 19–39 (ILVALMVTIGGIGFLFASLSS) and 61–81 (LIMGLYSLAAALLASYLWAVI).

The protein belongs to the Ycf4 family.

The protein resides in the cellular thylakoid membrane. In terms of biological role, seems to be required for the assembly of the photosystem I complex. The sequence is that of Photosystem I assembly protein Ycf4 from Synechococcus sp. (strain CC9311).